A 235-amino-acid polypeptide reads, in one-letter code: Adenosine 5'-phosphosulfate reductase (235 aa).

[4Fe-4S] cluster is bound by residues cysteine 121, cysteine 122, cysteine 204, and cysteine 207. The active-site Nucleophile; cysteine thiosulfonate intermediate is the cysteine 230.

This sequence belongs to the PAPS reductase family. CysH subfamily. [4Fe-4S] cluster is required as a cofactor.

It localises to the cytoplasm. The enzyme catalyses [thioredoxin]-disulfide + sulfite + AMP + 2 H(+) = adenosine 5'-phosphosulfate + [thioredoxin]-dithiol. The protein operates within sulfur metabolism; hydrogen sulfide biosynthesis; sulfite from sulfate. Functionally, catalyzes the formation of sulfite from adenosine 5'-phosphosulfate (APS) using thioredoxin as an electron donor. The protein is Adenosine 5'-phosphosulfate reductase of Geobacillus sp. (strain WCH70).